Consider the following 260-residue polypeptide: Trialysin (260 aa).

The first 19 residues, 1 to 19, serve as a signal peptide directing secretion; it reads MSKFWLLLLLVAAFQFAHS. Positions 20–55 are cleaved as a propeptide — removed in mature form, probably by the serine protease triapsin; that stretch reads YPAAEYELDETTNDEVRQFIGDGYFEDEGDDGDEER.

It belongs to the redulysin-like family. Expressed in salivary glands.

Its subcellular location is the secreted. The protein resides in the target cell membrane. Its function is as follows. Pore-forming protein that induces lysis of T.cruzi trypomastigotes, bacteria E.coli and human red blood cells. The parasite lysis is much more important than the hemolysis, probably due to difference in membrane composition. Its action on protozoan parasites and bacteria may indicate a role in the control of microorganism growth in the salivary glands. The protein is Trialysin of Triatoma infestans (Assassin bug).